The chain runs to 163 residues: Probable ribosome biogenesis protein RLP24 (163 aa).

It belongs to the eukaryotic ribosomal protein eL24 family. In terms of assembly, associated with nucleolar and cytoplasmic pre-60S particles. At the end of biogenesis it dissociates from cytoplasmic pre-60S particles and is likely to be exchanged for its ribosomal homolog, RPL24.

The protein localises to the nucleus. It is found in the nucleolus. Involved in the biogenesis of the 60S ribosomal subunit. Ensures the docking of GTPBP4/NOG1 to pre-60S particles. The chain is Probable ribosome biogenesis protein RLP24 (RSL24D1) from Pongo abelii (Sumatran orangutan).